We begin with the raw amino-acid sequence, 556 residues long: 2-succinyl-5-enolpyruvyl-6-hydroxy-3-cyclohexene-1-carboxylate synthase (556 aa).

It belongs to the TPP enzyme family. MenD subfamily. Homodimer. Requires Mg(2+) as cofactor. Mn(2+) serves as cofactor. Thiamine diphosphate is required as a cofactor.

The catalysed reaction is isochorismate + 2-oxoglutarate + H(+) = 5-enolpyruvoyl-6-hydroxy-2-succinyl-cyclohex-3-ene-1-carboxylate + CO2. The protein operates within quinol/quinone metabolism; 1,4-dihydroxy-2-naphthoate biosynthesis; 1,4-dihydroxy-2-naphthoate from chorismate: step 2/7. Its pathway is quinol/quinone metabolism; menaquinone biosynthesis. Functionally, catalyzes the thiamine diphosphate-dependent decarboxylation of 2-oxoglutarate and the subsequent addition of the resulting succinic semialdehyde-thiamine pyrophosphate anion to isochorismate to yield 2-succinyl-5-enolpyruvyl-6-hydroxy-3-cyclohexene-1-carboxylate (SEPHCHC). The sequence is that of 2-succinyl-5-enolpyruvyl-6-hydroxy-3-cyclohexene-1-carboxylate synthase from Salmonella gallinarum (strain 287/91 / NCTC 13346).